The sequence spans 380 residues: Cytochrome b (380 aa).

4 consecutive transmembrane segments (helical) span residues 34–54, 78–99, 114–134, and 179–199; these read FGSL…FLAM, WLIR…YLHI, WNIG…GYVL, and FFTF…IHLL. Residues His84 and His98 each coordinate heme b. Heme b is bound by residues His183 and His197. His202 is an a ubiquinone binding site. 4 consecutive transmembrane segments (helical) span residues 227-247, 289-309, 321-341, and 348-368; these read YKDL…ALFT, LGGV…PILH, ITQI…WIGG, and FITI…ILFP.

The protein belongs to the cytochrome b family. As to quaternary structure, the cytochrome bc1 complex contains 3 respiratory subunits (MT-CYB, CYC1 and UQCRFS1), 2 core proteins (UQCRC1 and UQCRC2) and probably 6 low-molecular weight proteins. It depends on heme b as a cofactor.

It localises to the mitochondrion inner membrane. Functionally, component of the ubiquinol-cytochrome c reductase complex (complex III or cytochrome b-c1 complex) that is part of the mitochondrial respiratory chain. The b-c1 complex mediates electron transfer from ubiquinol to cytochrome c. Contributes to the generation of a proton gradient across the mitochondrial membrane that is then used for ATP synthesis. This is Cytochrome b (mt-cyb) from Hemitrygon laosensis (Mekong freshwater stingray).